The primary structure comprises 80 residues: Pigment-dispersing hormone type 2 (80 aa).

An N-terminal signal peptide occupies residues methionine 1–alanine 23. Alanine 77 is subject to Alanine amide.

This sequence belongs to the arthropod PDH family. Eyestalk.

The protein localises to the secreted. Functionally, the pigment-dispersing hormone causes the migration of the distal retinal pigment into the proximal end of the pigment chromatophore cells and thus decreases the amount of light entering the retinulas. May also function as a neurotransmitter and/or neuromodulator. The chain is Pigment-dispersing hormone type 2 (PDH2) from Penaeus vannamei (Whiteleg shrimp).